The primary structure comprises 402 residues: uncharacterized protein (402 aa).

Residues 1–12 are Cytoplasmic-facing; the sequence is MFQQLSASIRHN. The chain crosses the membrane as a helical span at residues 13 to 33; sequence AHIIFLCISWYFISSLASQVT. Residues 34–50 lie on the Extracellular side of the membrane; the sequence is KQVLTVCPLPLFLGEFQ. Residues 51–71 form a helical membrane-spanning segment; sequence FIYTAVLAWFTCYIAYSFPGF. Residues 72 to 103 lie on the Cytoplasmic side of the membrane; it reads YRIFPNGTFPEYYIDDRETSRAARKESKLSSL. A helical membrane pass occupies residues 104–124; sequence IIPPSKPILQTVLPLGLFQFV. Topologically, residues 125–134 are extracellular; it reads GKYFGHTATS. A helical transmembrane segment spans residues 135-155; sequence LVPVSTVASIKTLSPMFILLL. Topologically, residues 156 to 165 are cytoplasmic; the sequence is QKILKISTLK. A helical membrane pass occupies residues 166–186; the sequence is ITLTLIFSLCTLVLGVWIIVQ. Over 187-206 the chain is Extracellular; sequence EDNRSPASSNELREFSKYGV. Residues 207-227 form a helical membrane-spanning segment; it reads ICAMISMFIFVLQNIYGKTVF. The Cytoplasmic portion of the chain corresponds to 228-271; it reads TYRSQTDESQSNSGFSRQESPLPLYEKLDEKLVAKKKPKSYDKL. Residues 272–292 form a helical membrane-spanning segment; it reads TLMIYISLVGFCLSFGWFITL. The Extracellular portion of the chain corresponds to 293–353; that stretch reads EFPVLFRYFF…TYSIANLMKR (61 aa). A helical membrane pass occupies residues 354–374; sequence FAIIAVSWVFIGRRITWLQVF. Over 375-402 the chain is Cytoplasmic; sequence GLVLNTLGLFLYERCTSQSKIKAKIRPE.

It belongs to the TPT transporter family.

The protein resides in the membrane. This is an uncharacterized protein from Saccharomyces cerevisiae (strain ATCC 204508 / S288c) (Baker's yeast).